We begin with the raw amino-acid sequence, 222 residues long: Protein GrpE (222 aa).

Residues 1–82 (MSDFNKDEYL…KADDTLTPLG (82 aa)) are disordered. Over residues 20–71 (SGQAAPAAASADSAAAAAGATQEGAAQPAAAQSQENGDSAAADGADKAGAAD) the composition is skewed to low complexity.

It belongs to the GrpE family. As to quaternary structure, homodimer.

Its subcellular location is the cytoplasm. Its function is as follows. Participates actively in the response to hyperosmotic and heat shock by preventing the aggregation of stress-denatured proteins, in association with DnaK and GrpE. It is the nucleotide exchange factor for DnaK and may function as a thermosensor. Unfolded proteins bind initially to DnaJ; upon interaction with the DnaJ-bound protein, DnaK hydrolyzes its bound ATP, resulting in the formation of a stable complex. GrpE releases ADP from DnaK; ATP binding to DnaK triggers the release of the substrate protein, thus completing the reaction cycle. Several rounds of ATP-dependent interactions between DnaJ, DnaK and GrpE are required for fully efficient folding. The chain is Protein GrpE from Bifidobacterium adolescentis (strain ATCC 15703 / DSM 20083 / NCTC 11814 / E194a).